A 354-amino-acid chain; its full sequence is DNA polymerase IV (354 aa).

In terms of domain architecture, UmuC spans 14–198 (IIHIDMDAFF…MDIAKFHGVG (185 aa)). Positions 18 and 116 each coordinate Mg(2+). Residue E117 is part of the active site.

Belongs to the DNA polymerase type-Y family. In terms of assembly, monomer. Mg(2+) serves as cofactor.

The protein localises to the cytoplasm. The catalysed reaction is DNA(n) + a 2'-deoxyribonucleoside 5'-triphosphate = DNA(n+1) + diphosphate. In terms of biological role, poorly processive, error-prone DNA polymerase involved in untargeted mutagenesis. Copies undamaged DNA at stalled replication forks, which arise in vivo from mismatched or misaligned primer ends. These misaligned primers can be extended by PolIV. Exhibits no 3'-5' exonuclease (proofreading) activity. May be involved in translesional synthesis, in conjunction with the beta clamp from PolIII. The protein is DNA polymerase IV of Streptococcus sanguinis (strain SK36).